A 141-amino-acid polypeptide reads, in one-letter code: MVDMDRISISLPTNLLAEFDEIIEERGYASRSEAIRDSIRDYLIKHKWIHSLEGHRAGTISIIYDHHSTDVMEKLTTIQHDYEKLIVATIHMHLDHDHCMEVVLVKGDASDIKDLTDKLTSQKGVKQVKLTVMVPGGNIPQ.

Ni(2+) contacts are provided by His80, His91, His93, and Cys99.

Belongs to the transcriptional regulatory CopG/NikR family. The cofactor is Ni(2+).

Its function is as follows. Transcriptional regulator. This Methanococcus maripaludis (strain C7 / ATCC BAA-1331) protein is Putative nickel-responsive regulator.